The sequence spans 441 residues: GTPase Der (441 aa).

EngA-type G domains are found at residues 2–164 and 173–343; these read HKVA…PADD and IRIS…DKWQ. GTP is bound by residues 8–15, 55–59, 116–119, 179–186, 226–230, and 288–291; these read GRPNVGKS, DTGGL, NKID, DTAGI, and NKWD.

The protein belongs to the TRAFAC class TrmE-Era-EngA-EngB-Septin-like GTPase superfamily. EngA (Der) GTPase family. As to quaternary structure, associates with the 50S ribosomal subunit.

GTPase that plays an essential role in the late steps of ribosome biogenesis. The protein is GTPase Der of Deinococcus deserti (strain DSM 17065 / CIP 109153 / LMG 22923 / VCD115).